The primary structure comprises 485 residues: Glutamate--tRNA ligase (485 aa).

A 'HIGH' region motif is present at residues 11-21 (PSPTGHLHIGN). A 'KMSKS' region motif is present at residues 252–256 (KLSKR). Lys255 contributes to the ATP binding site.

Belongs to the class-I aminoacyl-tRNA synthetase family. Glutamate--tRNA ligase type 1 subfamily. As to quaternary structure, monomer.

The protein localises to the cytoplasm. It catalyses the reaction tRNA(Glu) + L-glutamate + ATP = L-glutamyl-tRNA(Glu) + AMP + diphosphate. Functionally, catalyzes the attachment of glutamate to tRNA(Glu) in a two-step reaction: glutamate is first activated by ATP to form Glu-AMP and then transferred to the acceptor end of tRNA(Glu). The protein is Glutamate--tRNA ligase of Bacillus cytotoxicus (strain DSM 22905 / CIP 110041 / 391-98 / NVH 391-98).